A 1256-amino-acid chain; its full sequence is Pullulanase A (1256 aa).

The N-terminal stretch at 1–44 (MRKTPSHTEKKMVYSIRSLKNGTGSVLIGASLVLLAMATPTISS) is a signal peptide. Residues 42–117 (ISSDESTPTT…VTTETKAEEP (76 aa)) are disordered. Positions 48–61 (TPTTNEPNNRNTTT) are enriched in low complexity. Residues 79-90 (DISSPRNANASL) show a composition bias toward polar residues. Low complexity predominate over residues 99–111 (TEPTTSTSPVTTE). Substrate is bound by residues 141-143 (WTW), Trp153, Asp199, 248-250 (WYW), Trp261, Lys303, and Asn308. Ca(2+) contacts are provided by Ser646 and Tyr648. Substrate contacts are provided by residues 652–653 (YD) and Phe728. Asp763 (nucleophile) is an active-site residue. Glu792 (proton donor) is an active-site residue. Trp794 is a substrate binding site. Ca(2+) is bound by residues Met813, Thr816, and Asp817. The substrate site is built by Asp824, Arg827, and Tyr834. Residues Asp867 and Asp871 each contribute to the Ca(2+) site. Residues Asn881, Lys954, and 974-976 (DSY) contribute to the substrate site. Asp977 contacts Ca(2+). The disordered stretch occupies residues 1126 to 1224 (SQNGTSHEST…TPDRQAELPN (99 aa)). The segment covering 1134–1172 (STAEEKPDSTPSKPEHQDPAPEARPDSTKPDAKVADAEN) has biased composition (basic and acidic residues). Positions 1181 to 1194 (SQAEQPAQEAQASS) are enriched in low complexity. A compositionally biased stretch (polar residues) spans 1200–1210 (QNESVENSSKK). Positions 1222–1226 (LPNTG) match the LPXTG sorting signal motif. Pentaglycyl murein peptidoglycan amidated threonine is present on Thr1225. Positions 1226–1256 (GIKNENKLLFAGISLLALLGLGFLLKNKKEN) are cleaved as a propeptide — removed by sortase.

This sequence belongs to the glycosyl hydrolase 13 family.

Its subcellular location is the secreted. The protein resides in the cell wall. The protein localises to the cell surface. The enzyme catalyses Hydrolysis of (1-&gt;6)-alpha-D-glucosidic linkages in pullulan, amylopectin and glycogen, and in the alpha- and beta-limit dextrins of amylopectin and glycogen.. Its activity is regulated as follows. Inhibited by 4-O-alpha-D-glucopyranosylmoranoline (G1M). Functionally, virulence factor. Involved in the degradation of glycogen of the mammalian host cells. Hydrolyzes the alpha-1,6-branchpoints of glycogen. Hydrolyzes pullulan. Does not hydrolyze dextran. Binds to mouse lung alveolar type II cells that are rich in glycogen stores. Is an alpha-glucan-specific carbohydrate-binding protein, which binds to amylose (pure alpha-(1,4)-linked glucose), amylopectin (alpha-(1,4)-linked glucose with alpha-(1,6) branch points), pullulan (linear polymer of mixed alpha-(1,4)- and alpha-(1,6)-linked glucose) and glycogen (similar to amylopectin with more frequent alpha-(1,6) branch points) in vitro. Does not bind to dextran (a linear polymer of alpha-(1,6)-linked glucose). This chain is Pullulanase A, found in Streptococcus pneumoniae serotype 2 (strain D39 / NCTC 7466).